Reading from the N-terminus, the 133-residue chain is Putative actin-depolymerizing factor 11 (133 aa).

One can recognise an ADF-H domain in the interval 1–133; sequence MVLHDDCKLT…SLDAIRRRIN (133 aa).

The protein belongs to the actin-binding proteins ADF family.

It is found in the cytoplasm. Its subcellular location is the cytoskeleton. Actin-depolymerizing protein. Severs actin filaments (F-actin) and binds to actin monomers. The chain is Putative actin-depolymerizing factor 11 (ADF11) from Arabidopsis thaliana (Mouse-ear cress).